A 172-amino-acid chain; its full sequence is Small ribosomal subunit protein uS13c (172 aa).

The N-terminal 47 residues, 1–47 (MAHTLATPVAPSVSLICNTKLSVSLSSSSLAFRPVNPKNGGGLSIKC), are a transit peptide targeting the chloroplast.

Component of the chloroplast small ribosomal subunit (SSU). Mature 70S chloroplast ribosomes of higher plants consist of a small (30S) and a large (50S) subunit. The 30S small subunit contains 1 molecule of ribosomal RNA (16S rRNA) and 24 different proteins. The 50S large subunit contains 3 rRNA molecules (23S, 5S and 4.5S rRNA) and 33 different proteins. uS13c interacts with translation factor pY (PSRP1).

It localises to the plastid. Its subcellular location is the chloroplast. Its function is as follows. Component of the chloroplast ribosome (chloro-ribosome), a dedicated translation machinery responsible for the synthesis of chloroplast genome-encoded proteins, including proteins of the transcription and translation machinery and components of the photosynthetic apparatus. The polypeptide is Small ribosomal subunit protein uS13c (RPS13) (Spinacia oleracea (Spinach)).